The primary structure comprises 485 residues: GTPase Obg (485 aa).

One can recognise an Obg domain in the interval 1–159 (MKFVDEVRIF…LTLRLELKLL (159 aa)). Residues 160–332 (ADVGLLGFPN…LMDSVAEVLF (173 aa)) form the OBG-type G domain. GTP is bound by residues 166-173 (GFPNAGKS), 191-195 (FTTLV), 213-216 (DIPG), 284-287 (NKLD), and 313-315 (SCA). Mg(2+) contacts are provided by Ser173 and Thr193. 4 stretches are compositionally biased toward low complexity: residues 367 to 385 (AGAAAATKSATKKSAAAKK), 394 to 428 (RKAGAVAKTSAARKAGTAAAKKAPARKSGTAPVKK), 437 to 446 (RKSGTAPAKK), and 455 to 474 (RKSGSSGKAAAKKASAATKR). The segment at 367 to 485 (AGAAAATKSA…PARKSGGGRS (119 aa)) is disordered.

Belongs to the TRAFAC class OBG-HflX-like GTPase superfamily. OBG GTPase family. In terms of assembly, monomer. Mg(2+) serves as cofactor.

It is found in the cytoplasm. Its function is as follows. An essential GTPase which binds GTP, GDP and possibly (p)ppGpp with moderate affinity, with high nucleotide exchange rates and a fairly low GTP hydrolysis rate. Plays a role in control of the cell cycle, stress response, ribosome biogenesis and in those bacteria that undergo differentiation, in morphogenesis control. The protein is GTPase Obg of Myxococcus xanthus (strain DK1622).